Here is a 721-residue protein sequence, read N- to C-terminus: Transcription activator of gluconeogenesis ARB_05058 (721 aa).

A compositionally biased stretch (polar residues) spans 1–34 (MSPHQTTGQESDNMTVNGENAQASSQYIQSNEEM). A disordered region spans residues 1-62 (MSPHQTTGQE…PSRPKRKKAK (62 aa)). Over residues 40-55 (TEKKASTAKAAKDPSR) the composition is skewed to basic and acidic residues. Residues 65-93 (CYACQRGHLTCGDERPCQRCIKRGFQDAC) constitute a DNA-binding region (zn(2)-C6 fungal-type). Disordered stretches follow at residues 128-224 (QNNA…FNSA), 263-300 (GDTP…SNQA), 353-400 (SPAS…TPQL), 533-567 (NHNV…YNSS), and 635-666 (GLNG…QRRW). Polar residues-rich tracts occupy residues 133–213 (GSNT…TPSA), 267–277 (PSESGAQRGSI), 287–300 (LTGS…SNQA), and 361–379 (MMTT…GAFN). Low complexity-rich tracts occupy residues 380–399 (SRQN…STPQ) and 543–553 (GLMTGSTSRGS). The span at 640–661 (AASNETNELNGSLTNGATTNGR) shows a compositional bias: polar residues.

This sequence belongs to the ERT1/acuK family.

It localises to the nucleus. Transcription factor which regulates nonfermentable carbon utilization. Activator of gluconeogenetic genes. The polypeptide is Transcription activator of gluconeogenesis ARB_05058 (Arthroderma benhamiae (strain ATCC MYA-4681 / CBS 112371) (Trichophyton mentagrophytes)).